The following is an 87-amino-acid chain: MYVIELALRMSPMPVSVQRKEHDSAEALYQQVRSALEQGQPRLLELCCEKVEGKRLSVLTSDLLAVQIYEKTAASGGTKRPGFSFEA.

This sequence belongs to the UPF0367 family.

In Synechococcus sp. (strain WH7803), this protein is UPF0367 protein SynWH7803_2240.